The following is a 235-amino-acid chain: Rab-like protein 3 (235 aa).

Residues 1–235 are small GTPase-like; sequence MASLDRVKVL…GGNFKSLHYD (235 aa). Residues 16–21, 148–150, and 179–180 each bind GTP; these read GVGKSS, KLD, and DC.

This sequence belongs to the small GTPase superfamily. Rab family. Homodimer.

Functionally, required for KRAS signaling regulation and modulation of cell proliferation. Regulator of KRAS prenylation, and probably prenylation of other small GTPases. Required for lymphocyte development and function. Not required for myeloid cell development. The sequence is that of Rab-like protein 3 (rabl3) from Xenopus laevis (African clawed frog).